A 303-amino-acid polypeptide reads, in one-letter code: tRNA pseudouridine synthase B (303 aa).

The Nucleophile role is filled by Asp47.

This sequence belongs to the pseudouridine synthase TruB family. Type 1 subfamily.

It catalyses the reaction uridine(55) in tRNA = pseudouridine(55) in tRNA. Functionally, responsible for synthesis of pseudouridine from uracil-55 in the psi GC loop of transfer RNAs. The sequence is that of tRNA pseudouridine synthase B from Legionella pneumophila (strain Lens).